A 154-amino-acid polypeptide reads, in one-letter code: Myoglobin (154 aa).

A Globin domain is found at 2–148 (GLSDGEWQLV…FRNDIAAKYK (147 aa)). Residue Ser-4 is modified to Phosphoserine. His-65 is a binding site for nitrite. His-65 provides a ligand contact to O2. Thr-68 bears the Phosphothreonine mark. His-94 contacts heme b.

Belongs to the globin family. In terms of assembly, monomeric.

The protein resides in the cytoplasm. It is found in the sarcoplasm. It carries out the reaction Fe(III)-heme b-[protein] + nitric oxide + H2O = Fe(II)-heme b-[protein] + nitrite + 2 H(+). The catalysed reaction is H2O2 + AH2 = A + 2 H2O. Monomeric heme protein which primary function is to store oxygen and facilitate its diffusion within muscle tissues. Reversibly binds oxygen through a pentacoordinated heme iron and enables its timely and efficient release as needed during periods of heightened demand. Depending on the oxidative conditions of tissues and cells, and in addition to its ability to bind oxygen, it also has a nitrite reductase activity whereby it regulates the production of bioactive nitric oxide. Under stress conditions, like hypoxia and anoxia, it also protects cells against reactive oxygen species thanks to its pseudoperoxidase activity. This chain is Myoglobin (MB), found in Lutra lutra (European river otter).